Reading from the N-terminus, the 379-residue chain is Salicylate/benzoate carboxyl methyltransferase (379 aa).

Tyr-40 lines the S-adenosyl-L-homocysteine pocket. Gln-47 serves as a coordination point for salicylate. Residues Cys-82, Asn-87, Asp-119, Leu-120, Ser-155, and Phe-156 each contribute to the S-adenosyl-L-homocysteine site. Residues His-176 and Trp-177 each coordinate salicylate. Mg(2+) is bound by residues Asn-188, Asp-275, Phe-277, and Asn-278.

The protein belongs to the methyltransferase superfamily. Type-7 methyltransferase family. SABATH subfamily. As to quaternary structure, homodimer. It depends on Mg(2+) as a cofactor. As to expression, expressed in flowers and at lower levels in leaves and stems. Hardly detected in roots and siliques. Expressed in the sepals and the leaf trichomes and hydathodes.

It catalyses the reaction benzoate + S-adenosyl-L-methionine = methyl benzoate + S-adenosyl-L-homocysteine. The catalysed reaction is salicylate + S-adenosyl-L-methionine = methyl salicylate + S-adenosyl-L-homocysteine. Its function is as follows. Methyltransferase involved in the biosynthesis of methylsalicylate in response to stresses. Utilizes salicylic acid (SA) more efficiently than benzoic acid (BA). Can also use anthranilic acid and m-hydroxybenzoic acid as substrate. This Arabidopsis thaliana (Mouse-ear cress) protein is Salicylate/benzoate carboxyl methyltransferase (BSMT1).